A 162-amino-acid chain; its full sequence is UPF0102 protein Bpet0439 (162 aa).

Residues 15–52 (QAQQRQMKRRRAAAHRAARGPAPARAPRASPTQRTGTA) form a disordered region. Residues 20-32 (QMKRRRAAAHRAA) are compositionally biased toward basic residues. Residues 33–48 (RGPAPARAPRASPTQR) are compositionally biased toward low complexity.

This sequence belongs to the UPF0102 family.

The protein is UPF0102 protein Bpet0439 of Bordetella petrii (strain ATCC BAA-461 / DSM 12804 / CCUG 43448).